Consider the following 143-residue polypeptide: High mobility group protein B (143 aa).

Residues 1-22 (MSKAASQYATLEDLPSKPKRPQ) are disordered. Positions 18 to 86 (PKRPQTGFFI…TYDKQNDQWK (69 aa)) form a DNA-binding region, HMG box. Position 70 is a blocked amino end (Ala) (Ala-70). Basic and acidic residues-rich tracts occupy residues 100-120 (AKKALKEKTKKSKAAEKELEK) and 131-143 (AKKDDKKAPAKKK). Positions 100 to 143 (AKKALKEKTKKSKAAEKELEKSKKKAPAAAPAKKDDKKAPAKKK) are disordered.

It localises to the nucleus. Its subcellular location is the chromosome. This chain is High mobility group protein B, found in Tetrahymena thermophila.